The primary structure comprises 420 residues: Gamma-glutamyl phosphate reductase (420 aa).

Belongs to the gamma-glutamyl phosphate reductase family.

The protein localises to the cytoplasm. The catalysed reaction is L-glutamate 5-semialdehyde + phosphate + NADP(+) = L-glutamyl 5-phosphate + NADPH + H(+). It functions in the pathway amino-acid biosynthesis; L-proline biosynthesis; L-glutamate 5-semialdehyde from L-glutamate: step 2/2. Its function is as follows. Catalyzes the NADPH-dependent reduction of L-glutamate 5-phosphate into L-glutamate 5-semialdehyde and phosphate. The product spontaneously undergoes cyclization to form 1-pyrroline-5-carboxylate. This Streptococcus pneumoniae serotype 2 (strain D39 / NCTC 7466) protein is Gamma-glutamyl phosphate reductase.